Here is a 35-residue protein sequence, read N- to C-terminus: Cytochrome c-550 (35 aa).

Residues C17, C20, and H21 each coordinate heme c.

Post-translationally, binds 1 heme c group covalently per subunit.

Functionally, monoheme cytochrome which functions as an electron carrier in the reduction of nitrite by membrane vesicles. The chain is Cytochrome c-550 from Virgibacillus halodenitrificans (Bacillus halodenitrificans).